Reading from the N-terminus, the 208-residue chain is Thiamine-phosphate synthase (208 aa).

Residues 37–39 (QVR) and Asn-70 contribute to the 4-amino-2-methyl-5-(diphosphooxymethyl)pyrimidine site. Asp-71 and Asp-90 together coordinate Mg(2+). Thr-109 lines the 4-amino-2-methyl-5-(diphosphooxymethyl)pyrimidine pocket. 135-137 (TTS) contributes to the 2-[(2R,5Z)-2-carboxy-4-methylthiazol-5(2H)-ylidene]ethyl phosphate binding site. Lys-138 lines the 4-amino-2-methyl-5-(diphosphooxymethyl)pyrimidine pocket. Gly-166 serves as a coordination point for 2-[(2R,5Z)-2-carboxy-4-methylthiazol-5(2H)-ylidene]ethyl phosphate.

This sequence belongs to the thiamine-phosphate synthase family. Requires Mg(2+) as cofactor.

The catalysed reaction is 2-[(2R,5Z)-2-carboxy-4-methylthiazol-5(2H)-ylidene]ethyl phosphate + 4-amino-2-methyl-5-(diphosphooxymethyl)pyrimidine + 2 H(+) = thiamine phosphate + CO2 + diphosphate. It carries out the reaction 2-(2-carboxy-4-methylthiazol-5-yl)ethyl phosphate + 4-amino-2-methyl-5-(diphosphooxymethyl)pyrimidine + 2 H(+) = thiamine phosphate + CO2 + diphosphate. It catalyses the reaction 4-methyl-5-(2-phosphooxyethyl)-thiazole + 4-amino-2-methyl-5-(diphosphooxymethyl)pyrimidine + H(+) = thiamine phosphate + diphosphate. It functions in the pathway cofactor biosynthesis; thiamine diphosphate biosynthesis; thiamine phosphate from 4-amino-2-methyl-5-diphosphomethylpyrimidine and 4-methyl-5-(2-phosphoethyl)-thiazole: step 1/1. In terms of biological role, condenses 4-methyl-5-(beta-hydroxyethyl)thiazole monophosphate (THZ-P) and 2-methyl-4-amino-5-hydroxymethyl pyrimidine pyrophosphate (HMP-PP) to form thiamine monophosphate (TMP). The protein is Thiamine-phosphate synthase of Salinispora arenicola (strain CNS-205).